The sequence spans 245 residues: tRNA1(Val) (adenine(37)-N6)-methyltransferase (245 aa).

The protein belongs to the methyltransferase superfamily. tRNA (adenine-N(6)-)-methyltransferase family.

The protein resides in the cytoplasm. It carries out the reaction adenosine(37) in tRNA1(Val) + S-adenosyl-L-methionine = N(6)-methyladenosine(37) in tRNA1(Val) + S-adenosyl-L-homocysteine + H(+). Its function is as follows. Specifically methylates the adenine in position 37 of tRNA(1)(Val) (anticodon cmo5UAC). In Escherichia coli (strain SE11), this protein is tRNA1(Val) (adenine(37)-N6)-methyltransferase.